The primary structure comprises 653 residues: Multidomain regulatory protein MT1410 (653 aa).

The PAC domain maps to 86–142; sequence SGSEWRLQTDYDGSGVEERYFDFVVTPRRRADGSIEGVQLIVDDVTSRVRARQAAEA. In terms of domain architecture, PPM-type phosphatase spans 177 to 396; it reads DIAAEYLVAA…DDVTLLAMQR (220 aa). Mn(2+) contacts are provided by aspartate 211, valine 212, aspartate 328, and aspartate 387. The segment at 397–544 is anti-sigma factor kinase region; the sequence is RAPTPPLHIT…TMVRRAAFQQ (148 aa). Residues 546-653 enclose the STAS domain; it reads IDSEFVSLVE…ADTEDIFAQE (108 aa). Serine 600 is modified (phosphoserine).

It depends on Mg(2+) as a cofactor. Mn(2+) serves as cofactor. Post-translationally, autophosphorylated.

It carries out the reaction O-phospho-L-seryl-[protein] + H2O = L-seryl-[protein] + phosphate. The catalysed reaction is O-phospho-L-threonyl-[protein] + H2O = L-threonyl-[protein] + phosphate. It catalyses the reaction L-seryl-[protein] + ATP = O-phospho-L-seryl-[protein] + ADP + H(+). The enzyme catalyses L-threonyl-[protein] + ATP = O-phospho-L-threonyl-[protein] + ADP + H(+). Functionally, primarily acts as an independent SigF regulator that is sensitive to the osmosensory signal, mediating the cross talk of PknD with the SigF regulon. Possesses both phosphatase and kinase activities. The kinase domain functions as a classic anti-sigma factor-like kinase to phosphorylate the anti-anti-sigma factor domain at the canonical regulatory site, and the phosphatase domain antagonizes this activity. This chain is Multidomain regulatory protein MT1410, found in Mycobacterium tuberculosis (strain CDC 1551 / Oshkosh).